Here is a 176-residue protein sequence, read N- to C-terminus: uncharacterized protein (176 aa).

The interval R71–Y176 is disordered. 2 stretches are compositionally biased toward low complexity: residues D77 to G87 and S100 to R109. Basic residues predominate over residues K140–G152.

This is an uncharacterized protein from Orgyia pseudotsugata multicapsid polyhedrosis virus (OpMNPV).